The primary structure comprises 49 residues: uncharacterized protein (49 aa).

The chain crosses the membrane as a helical span at residues 22–42 (AIVGISIMIIIAIGIYLIIEY).

Its subcellular location is the membrane. This is an uncharacterized protein from Methanocaldococcus jannaschii (strain ATCC 43067 / DSM 2661 / JAL-1 / JCM 10045 / NBRC 100440) (Methanococcus jannaschii).